Reading from the N-terminus, the 217-residue chain is MOB kinase activator 3A (217 aa).

Residues Cys83, Cys88, His165, and His170 each contribute to the Zn(2+) site.

Belongs to the MOB1/phocein family.

Its function is as follows. May regulate the activity of kinases. The polypeptide is MOB kinase activator 3A (MOB3A) (Bos taurus (Bovine)).